We begin with the raw amino-acid sequence, 113 residues long: uncharacterized protein (113 aa).

Disordered stretches follow at residues 1-22 (MGEHAIKRHMRQRKPTKHPLAQ) and 90-113 (DGRHTTESSFEHSSPSRSPQSDDL). The span at 90 to 99 (DGRHTTESSF) shows a compositional bias: basic and acidic residues. Low complexity predominate over residues 100–113 (EHSSPSRSPQSDDL).

This is an uncharacterized protein from Mycobacterium tuberculosis (strain CDC 1551 / Oshkosh).